A 288-amino-acid chain; its full sequence is MSQFSFTKMHGLGNSYIYVNMFEEQIPEEDLALVAEKVSNINTGIGADGMILICPSDVAPVKMRMFNNDGSEGKSCGNGLRCVAKYAYEHKLVEDTVFTIETLAGIVTAEVTVEEGKVTLAKIDMGAPRLTRAEIPMLGEGETPFIRENFLYNNHRYAFTAVSMGNPHAVIFVDDVEQAPLTTLGPVLETHEMFPERVNVEFIEILNEEEMNFRVWERGSGVTQACGTGACAAVVASILNGKMERGKEITVHLAGGDLMIAWTEEGNVLMKGPAEVICHGVYEYKIEA.

Asparagine 14 and asparagine 67 together coordinate substrate. The active-site Proton donor is cysteine 76. Substrate contacts are provided by residues 77–78 (GN), asparagine 166, asparagine 199, and 217–218 (ER). Cysteine 226 acts as the Proton acceptor in catalysis. 227–228 (GT) serves as a coordination point for substrate.

This sequence belongs to the diaminopimelate epimerase family. As to quaternary structure, homodimer.

It is found in the cytoplasm. It catalyses the reaction (2S,6S)-2,6-diaminopimelate = meso-2,6-diaminopimelate. It functions in the pathway amino-acid biosynthesis; L-lysine biosynthesis via DAP pathway; DL-2,6-diaminopimelate from LL-2,6-diaminopimelate: step 1/1. Catalyzes the stereoinversion of LL-2,6-diaminopimelate (L,L-DAP) to meso-diaminopimelate (meso-DAP), a precursor of L-lysine and an essential component of the bacterial peptidoglycan. The polypeptide is Diaminopimelate epimerase (Bacillus cereus (strain 03BB102)).